A 473-amino-acid polypeptide reads, in one-letter code: Cysteine--tRNA ligase (473 aa).

Cys28 provides a ligand contact to Zn(2+). Positions 30-40 match the 'HIGH' region motif; the sequence is VTVYDLCHLGH. The Zn(2+) site is built by Cys213, His238, and Glu242. Positions 270–274 match the 'KMSKS' region motif; the sequence is KMSKS. An ATP-binding site is contributed by Lys273.

This sequence belongs to the class-I aminoacyl-tRNA synthetase family. Monomer. Zn(2+) serves as cofactor.

Its subcellular location is the cytoplasm. The catalysed reaction is tRNA(Cys) + L-cysteine + ATP = L-cysteinyl-tRNA(Cys) + AMP + diphosphate. This is Cysteine--tRNA ligase from Blochmanniella pennsylvanica (strain BPEN).